A 179-amino-acid chain; its full sequence is Shikimate kinase (179 aa).

Position 11–16 (11–16 (GAGKTT)) interacts with ATP. Threonine 15 serves as a coordination point for Mg(2+). 3 residues coordinate substrate: aspartate 33, arginine 57, and glycine 79. An ATP-binding site is contributed by arginine 118. Arginine 140 provides a ligand contact to substrate.

This sequence belongs to the shikimate kinase family. Monomer. Requires Mg(2+) as cofactor.

It localises to the cytoplasm. The enzyme catalyses shikimate + ATP = 3-phosphoshikimate + ADP + H(+). It functions in the pathway metabolic intermediate biosynthesis; chorismate biosynthesis; chorismate from D-erythrose 4-phosphate and phosphoenolpyruvate: step 5/7. Functionally, catalyzes the specific phosphorylation of the 3-hydroxyl group of shikimic acid using ATP as a cosubstrate. The sequence is that of Shikimate kinase from Bacteroides fragilis (strain ATCC 25285 / DSM 2151 / CCUG 4856 / JCM 11019 / LMG 10263 / NCTC 9343 / Onslow / VPI 2553 / EN-2).